Consider the following 314-residue polypeptide: Solute carrier family 25 member 33 (314 aa).

Solcar repeat units follow at residues 4–111 (KDTL…SKET), 119–206 (NSGV…LKKY), and 224–308 (SDFL…IVHL). Transmembrane regions (helical) follow at residues 7–27 (LLHL…TCPL), 44–58 (VFQV…AGVI), 114–134 (GIFV…AAFI), 183–203 (LTAS…YETL), 226–246 (FLGL…IAYP), and 291–311 (QIPN…LLAE).

This sequence belongs to the mitochondrial carrier (TC 2.A.29) family.

Its subcellular location is the mitochondrion inner membrane. In terms of biological role, mitochondrial transporter that imports/exports pyrimidine nucleotides into and from mitochondria which participates in dendritic cell endocytosis. The chain is Solute carrier family 25 member 33 (slc25a33) from Danio rerio (Zebrafish).